The primary structure comprises 337 residues: MRVQDVYNVIYTHTEGEPLCIIYSGVPYPAGSTILEKRAFLEENYDWLRKALMREPRGHADMFGVFLTPPSSRDYDAGLIYIDGKEYSHMCGHGTIAVAMAMVANGLVARDPSGLTRIRFETTAGLVVAEVAHEDDRVLWTRFENVPAYVAAQDIAFELPGYGPLKADLVWGGNYFGIIDLRGTSLRIAPENGSELSRMGLIAREEIRKKVTVQHPTEAHINNLNFVTFWHEPTIEGCLYKNVHVFSAGQLDRSPGGTGTSAMMAYFEARGVIGLNQPITSEGLLGSGTFEGCLIGETTLGTVRAVRPTVKGTAGMLGTASWTINREDPVDAGFLVL.

Cys-91 serves as the catalytic Proton acceptor. Residues 92-93 (GH), Asp-252, and 257-258 (GT) contribute to the substrate site.

The protein belongs to the proline racemase family.

It carries out the reaction trans-4-hydroxy-L-proline = cis-4-hydroxy-D-proline. Functionally, catalyzes the epimerization of trans-4-hydroxy-L-proline (t4LHyp) to cis-4-hydroxy-D-proline (c4DHyp). Is likely involved in a degradation pathway that converts t4LHyp to alpha-ketoglutarate. Displays no proline racemase activity. This Cereibacter sphaeroides (strain ATCC 17029 / ATH 2.4.9) (Rhodobacter sphaeroides) protein is 4-hydroxyproline 2-epimerase.